Here is a 209-residue protein sequence, read N- to C-terminus: Uracil phosphoribosyltransferase (209 aa).

5-phospho-alpha-D-ribose 1-diphosphate is bound by residues R79, R104, and 131 to 139; that span reads DPMLATGNS. Uracil is bound by residues I194 and 199-201; that span reads GDA. Residue D200 participates in 5-phospho-alpha-D-ribose 1-diphosphate binding.

Belongs to the UPRTase family. Requires Mg(2+) as cofactor.

The enzyme catalyses UMP + diphosphate = 5-phospho-alpha-D-ribose 1-diphosphate + uracil. It functions in the pathway pyrimidine metabolism; UMP biosynthesis via salvage pathway; UMP from uracil: step 1/1. With respect to regulation, allosterically activated by GTP. Its function is as follows. Catalyzes the conversion of uracil and 5-phospho-alpha-D-ribose 1-diphosphate (PRPP) to UMP and diphosphate. The sequence is that of Uracil phosphoribosyltransferase from Rhizobium rhizogenes (strain K84 / ATCC BAA-868) (Agrobacterium radiobacter).